Consider the following 286-residue polypeptide: Structural protein p32K (286 aa).

Residues 1-12 (MYVTNNTALAGG) constitute a propeptide, removed in mature form. The interval 1–41 (MYVTNNTALAGGAYRKRKKKFQRPKPRKRARKSKKPPKSEN) is disordered. Basic residues predominate over residues 14 to 36 (YRKRKKKFQRPKPRKRARKSKKP).

The protein belongs to the atadenoviridae p32K protein family.

It localises to the virion. This is Structural protein p32K from Ovine adenovirus D serotype 7 (isolate OAV287) (OAdV-7).